A 350-amino-acid polypeptide reads, in one-letter code: Ion-translocating oxidoreductase complex subunit D (350 aa).

A run of 4 helical transmembrane segments spans residues 37–57 (YFFG…ALTA), 68–88 (AVLS…IGVA), 89–109 (IPPI…IVLV), and 120–140 (IFNP…VQMT). FMN phosphoryl threonine is present on threonine 185. Transmembrane regions (helical) follow at residues 212 to 232 (GYGV…LIML), 239 to 259 (WHIS…GYLL), 265 to 285 (VGPL…FIAT), 291 to 311 (ATSV…VYVI), and 315 to 335 (GGYP…APFI).

It belongs to the NqrB/RnfD family. As to quaternary structure, the complex is composed of six subunits: RnfA, RnfB, RnfC, RnfD, RnfE and RnfG. FMN serves as cofactor.

Its subcellular location is the cell inner membrane. Part of a membrane-bound complex that couples electron transfer with translocation of ions across the membrane. The sequence is that of Ion-translocating oxidoreductase complex subunit D from Shewanella pealeana (strain ATCC 700345 / ANG-SQ1).